Here is a 350-residue protein sequence, read N- to C-terminus: UDP-3-O-acylglucosamine N-acyltransferase (350 aa).

Histidine 240 acts as the Proton acceptor in catalysis.

Belongs to the transferase hexapeptide repeat family. LpxD subfamily. As to quaternary structure, homotrimer.

It carries out the reaction a UDP-3-O-[(3R)-3-hydroxyacyl]-alpha-D-glucosamine + a (3R)-hydroxyacyl-[ACP] = a UDP-2-N,3-O-bis[(3R)-3-hydroxyacyl]-alpha-D-glucosamine + holo-[ACP] + H(+). It participates in bacterial outer membrane biogenesis; LPS lipid A biosynthesis. Its function is as follows. Catalyzes the N-acylation of UDP-3-O-acylglucosamine using 3-hydroxyacyl-ACP as the acyl donor. Is involved in the biosynthesis of lipid A, a phosphorylated glycolipid that anchors the lipopolysaccharide to the outer membrane of the cell. The protein is UDP-3-O-acylglucosamine N-acyltransferase of Methylobacillus flagellatus (strain ATCC 51484 / DSM 6875 / VKM B-1610 / KT).